Consider the following 251-residue polypeptide: Cytochrome c oxidase subunit 2 (251 aa).

An N-terminal signal peptide occupies residues 1 to 15 (MLTFLSNLNNMIIMN). Residues 16-42 (DVPTPYGVYFQDSATPNQEGILELHDN) are Mitochondrial intermembrane-facing. Residues 43 to 64 (IMFYLLVILGLVSWLLFTITRT) traverse the membrane as a helical segment. Topologically, residues 65–82 (YSKNPIAYKYIKHGQTIE) are mitochondrial matrix. The helical transmembrane segment at 83-107 (IIWTIFPAVVLLIIAFPSFILLYLC) threads the bilayer. At 108–251 (DEVISPAMTI…PSFLEWLNEQ (144 aa)) the chain is on the mitochondrial intermembrane side. Positions 186, 221, 223, 225, 229, and 232 each coordinate Cu cation. Position 223 (Glu223) interacts with Mg(2+).

This sequence belongs to the cytochrome c oxidase subunit 2 family. Component of the cytochrome c oxidase (complex IV, CIV), a multisubunit enzyme composed of a catalytic core of 3 subunits and several supernumerary subunits. The complex exists as a monomer or a dimer and forms supercomplexes (SCs) in the inner mitochondrial membrane with ubiquinol-cytochrome c oxidoreductase (cytochrome b-c1 complex, complex III, CIII). The cofactor is Cu cation. The signal sequence of COX2 is processed by IMP1.

It localises to the mitochondrion inner membrane. The catalysed reaction is 4 Fe(II)-[cytochrome c] + O2 + 8 H(+)(in) = 4 Fe(III)-[cytochrome c] + 2 H2O + 4 H(+)(out). Functionally, component of the cytochrome c oxidase, the last enzyme in the mitochondrial electron transport chain which drives oxidative phosphorylation. The respiratory chain contains 3 multisubunit complexes succinate dehydrogenase (complex II, CII), ubiquinol-cytochrome c oxidoreductase (cytochrome b-c1 complex, complex III, CIII) and cytochrome c oxidase (complex IV, CIV), that cooperate to transfer electrons derived from NADH and succinate to molecular oxygen, creating an electrochemical gradient over the inner membrane that drives transmembrane transport and the ATP synthase. Cytochrome c oxidase is the component of the respiratory chain that catalyzes the reduction of oxygen to water. Electrons originating from reduced cytochrome c in the intermembrane space (IMS) are transferred via the dinuclear copper A center (CU(A)) of subunit 2 and heme A of subunit 1 to the active site in subunit 1, a binuclear center (BNC) formed by heme A3 and copper B (CU(B)). The BNC reduces molecular oxygen to 2 water molecules using 4 electrons from cytochrome c in the IMS and 4 protons from the mitochondrial matrix. In Lachancea kluyveri (strain ATCC 58438 / CBS 3082 / BCRC 21498 / NBRC 1685 / JCM 7257 / NCYC 543 / NRRL Y-12651) (Yeast), this protein is Cytochrome c oxidase subunit 2 (COX2).